The sequence spans 284 residues: 4-diphosphocytidyl-2-C-methyl-D-erythritol kinase (284 aa).

The active site involves Lys-14. 98-108 (PMGGGLGGGSS) is a binding site for ATP. The active site involves Asp-140.

The protein belongs to the GHMP kinase family. IspE subfamily.

The enzyme catalyses 4-CDP-2-C-methyl-D-erythritol + ATP = 4-CDP-2-C-methyl-D-erythritol 2-phosphate + ADP + H(+). It participates in isoprenoid biosynthesis; isopentenyl diphosphate biosynthesis via DXP pathway; isopentenyl diphosphate from 1-deoxy-D-xylulose 5-phosphate: step 3/6. Functionally, catalyzes the phosphorylation of the position 2 hydroxy group of 4-diphosphocytidyl-2C-methyl-D-erythritol. The protein is 4-diphosphocytidyl-2-C-methyl-D-erythritol kinase of Shewanella oneidensis (strain ATCC 700550 / JCM 31522 / CIP 106686 / LMG 19005 / NCIMB 14063 / MR-1).